A 286-amino-acid polypeptide reads, in one-letter code: ATP synthase gamma chain (286 aa).

It belongs to the ATPase gamma chain family. As to quaternary structure, F-type ATPases have 2 components, CF(1) - the catalytic core - and CF(0) - the membrane proton channel. CF(1) has five subunits: alpha(3), beta(3), gamma(1), delta(1), epsilon(1). CF(0) has three main subunits: a, b and c.

Its subcellular location is the cell inner membrane. In terms of biological role, produces ATP from ADP in the presence of a proton gradient across the membrane. The gamma chain is believed to be important in regulating ATPase activity and the flow of protons through the CF(0) complex. This is ATP synthase gamma chain from Shewanella halifaxensis (strain HAW-EB4).